The chain runs to 62 residues: MSQNLFQILLIFAILAALQVQGFLFPTYSSGYDYDCYGYGNGYGNGYGNGYGYGNGYGYGGY.

The signal sequence occupies residues M1–G22.

The protein is Fungus-induced protein 1 of Caenorhabditis briggsae.